The sequence spans 109 residues: uncharacterized protein (109 aa).

This is an uncharacterized protein from Escherichia coli (strain K12).